The primary structure comprises 323 residues: MAFLEDGNHTAVTEFILVGLTDDPVLKVILFTIILCIYLVTVSGNLSTILLIRVSSQLHHPMYFFLSHLASVDLGYSSSVTPNMLINFLAENNTISYIGCSIQFGSATFFGVLECFLLAVMAYDRFVAICNPLLYSIKMSTQVCVKLVVGSYIGSSLNASFVTVSIFNLLFCGPNKINHFFCDFDPLIELSCSDVSVPVAVTSCSAGLITMITVFVIAVSYTYILITVLKMRSTEGRHKAFSTCTSHLTAVTLFYGTVTFIYVMPKSNYSTDQNKVVSVFYMVVIPMLNPLIYSLRNNEIKGALKRQLGKKIFSQSNILFCKS.

The Extracellular segment spans residues 1-28 (MAFLEDGNHTAVTEFILVGLTDDPVLKV). An N-linked (GlcNAc...) asparagine glycan is attached at asparagine 8. A helical transmembrane segment spans residues 29–49 (ILFTIILCIYLVTVSGNLSTI). At 50–57 (LLIRVSSQ) the chain is on the cytoplasmic side. The chain crosses the membrane as a helical span at residues 58–78 (LHHPMYFFLSHLASVDLGYSS). The Extracellular portion of the chain corresponds to 79 to 102 (SVTPNMLINFLAENNTISYIGCSI). Residue asparagine 92 is glycosylated (N-linked (GlcNAc...) asparagine). The cysteines at positions 100 and 192 are disulfide-linked. The chain crosses the membrane as a helical span at residues 103-123 (QFGSATFFGVLECFLLAVMAY). Topologically, residues 124-136 (DRFVAICNPLLYS) are cytoplasmic. A helical membrane pass occupies residues 137–157 (IKMSTQVCVKLVVGSYIGSSL). At 158 to 199 (NASFVTVSIFNLLFCGPNKINHFFCDFDPLIELSCSDVSVPV) the chain is on the extracellular side. Residues 200 to 220 (AVTSCSAGLITMITVFVIAVS) traverse the membrane as a helical segment. The Cytoplasmic segment spans residues 221 to 240 (YTYILITVLKMRSTEGRHKA). A helical membrane pass occupies residues 241–261 (FSTCTSHLTAVTLFYGTVTFI). The Extracellular portion of the chain corresponds to 262–274 (YVMPKSNYSTDQN). Asparagine 268 is a glycosylation site (N-linked (GlcNAc...) asparagine). Residues 275–295 (KVVSVFYMVVIPMLNPLIYSL) traverse the membrane as a helical segment. Residues 296–323 (RNNEIKGALKRQLGKKIFSQSNILFCKS) lie on the Cytoplasmic side of the membrane.

This sequence belongs to the G-protein coupled receptor 1 family.

It localises to the cell membrane. Its function is as follows. Potential odorant receptor. This is Olfactory receptor 5P58 from Mus musculus (Mouse).